Here is a 164-residue protein sequence, read N- to C-terminus: Ubiquitin-fold modifier-conjugating enzyme 1 (164 aa).

Cys-116 acts as the Glycyl thioester intermediate in catalysis.

This sequence belongs to the ubiquitin-conjugating enzyme family. UFC1 subfamily.

E2-like enzyme which forms an intermediate with UFM1 via a thioester linkage. This Drosophila willistoni (Fruit fly) protein is Ubiquitin-fold modifier-conjugating enzyme 1.